A 492-amino-acid polypeptide reads, in one-letter code: Gamma-aminobutyric acid receptor subunit alpha-3 (492 aa).

A signal peptide spans 1–28; the sequence is MIITQMSQFYMAGLGLLFLINILPGTTG. Over 29-274 the chain is Extracellular; it reads QVESRRQEPG…MTTHFHLKRK (246 aa). A glycan (N-linked (GlcNAc...) asparagine) is linked at Asn-63. Arg-119 is a binding site for 4-aminobutanoate. N-linked (GlcNAc...) asparagine glycans are attached at residues Asn-163 and Asn-176. Thr-182 provides a ligand contact to 4-aminobutanoate. A disulfide bridge links Cys-191 with Cys-205. Asn-228 carries N-linked (GlcNAc...) asparagine glycosylation. A helical transmembrane segment spans residues 275 to 295; sequence IGYFVIQTYLPCIMTVILSQV. At 296–305 the chain is on the cytoplasmic side; that stretch reads SFWLNRESVP. Residues 306-325 form a helical membrane-spanning segment; that stretch reads ARTVFGVTTVLTMTTLSISA. Topologically, residues 326-336 are extracellular; the sequence is RNSLPKVAYAT. A helical transmembrane segment spans residues 337–357; that stretch reads AMDWFMAVCYAFVFSALIEFA. Over 358–457 the chain is Cytoplasmic; the sequence is TVNYFTKRSW…TYNSVSKVDK (100 aa). A Phosphoserine modification is found at Ser-426. A Phosphothreonine modification is found at Thr-427. Ser-433 carries the post-translational modification Phosphoserine. A helical transmembrane segment spans residues 458–478; that stretch reads ISRIIFPVLFAIFNLVYWATY. Over 479-492 the chain is Extracellular; the sequence is VNRESAIKGMIRKQ.

This sequence belongs to the ligand-gated ion channel (TC 1.A.9) family. Gamma-aminobutyric acid receptor (TC 1.A.9.5) subfamily. GABRA3 sub-subfamily. In terms of assembly, heteropentamer, formed by a combination of alpha (GABRA1-6), beta (GABRB1-3), gamma (GABRG1-3), delta (GABRD), epsilon (GABRE), rho (GABRR1-3), pi (GABRP) and theta (GABRQ) chains, each subunit exhibiting distinct physiological and pharmacological properties. Binds UBQLN1. Interacts with GPHN.

The protein resides in the postsynaptic cell membrane. It is found in the cell membrane. The catalysed reaction is chloride(in) = chloride(out). Functionally, alpha subunit of the heteropentameric ligand-gated chloride channel gated by gamma-aminobutyric acid (GABA), a major inhibitory neurotransmitter in the brain. GABA-gated chloride channels, also named GABA(A) receptors (GABAAR), consist of five subunits arranged around a central pore and contain GABA active binding site(s) located at the alpha and beta subunit interface(s). When activated by GABA, GABAARs selectively allow the flow of chloride anions across the cell membrane down their electrochemical gradient. Chloride influx into the postsynaptic neuron following GABAAR opening decreases the neuron ability to generate a new action potential, thereby reducing nerve transmission. The sequence is that of Gamma-aminobutyric acid receptor subunit alpha-3 (GABRA3) from Bos taurus (Bovine).